The sequence spans 129 residues: UPF0344 protein MW0851 (129 aa).

The next 4 helical transmembrane spans lie at 1 to 21 (MLHL…ATYL), 36 to 56 (LHMI…WILI), 67 to 87 (MLLT…EVSI), and 99 to 119 (MFWI…ILPL).

It belongs to the UPF0344 family.

It is found in the cell membrane. The sequence is that of UPF0344 protein MW0851 from Staphylococcus aureus (strain MW2).